Consider the following 397-residue polypeptide: Dual oxidase maturation factor 1 (397 aa).

2 consecutive transmembrane segments (helical) span residues 26–46 and 57–77; these read FVIF…LPGV and YVLM…PCWA. A glycan (N-linked (GlcNAc...) asparagine) is linked at asparagine 109. 3 helical membrane-spanning segments follow: residues 191–211, 218–238, and 261–281; these read AAIW…LFLP, ILAT…LSPC, and CFYL…GLGI. Positions 324-376 are disordered; that stretch reads YGTNTTNSSRDKNDISSDKTAGSSGFQSRTSTCQSSASSASLRSQSSIETVHD. 2 N-linked (GlcNAc...) asparagine glycosylation sites follow: asparagine 327 and asparagine 330. Over residues 341–350 the composition is skewed to polar residues; it reads DKTAGSSGFQ. Low complexity predominate over residues 351–370; that stretch reads SRTSTCQSSASSASLRSQSS.

Belongs to the DUOXA family. As to quaternary structure, interacts with bli-3 and tsp-15. Interacts with csnk-1. In terms of tissue distribution, expressed in the hypodermis, specifically in seam cells, the terminal bulb of the pharynx, the distal region of the gonadal arm, vulva, spermatheca and uterus.

Its subcellular location is the membrane. In terms of biological role, plays a role in cuticle biogenesis. In complex with tsp-15 and the dual oxidase bli-3, promotes the generation of reactive oxygen species (ROS) and tyrosine cross-linking of collagen, thus stabilizing cuticular extracellular matrix. In Caenorhabditis elegans, this protein is Dual oxidase maturation factor 1.